Consider the following 255-residue polypeptide: Hydroxyacylglutathione hydrolase (255 aa).

Zn(2+) contacts are provided by His-52, His-54, Asp-56, His-57, His-109, Asp-126, and His-166.

The protein belongs to the metallo-beta-lactamase superfamily. Glyoxalase II family. As to quaternary structure, monomer. Zn(2+) serves as cofactor.

The catalysed reaction is an S-(2-hydroxyacyl)glutathione + H2O = a 2-hydroxy carboxylate + glutathione + H(+). Its pathway is secondary metabolite metabolism; methylglyoxal degradation; (R)-lactate from methylglyoxal: step 2/2. Functionally, thiolesterase that catalyzes the hydrolysis of S-D-lactoyl-glutathione to form glutathione and D-lactic acid. This chain is Hydroxyacylglutathione hydrolase, found in Anaeromyxobacter dehalogenans (strain 2CP-C).